The sequence spans 908 residues: Protein translocase subunit SecA (908 aa).

ATP contacts are provided by residues glutamine 90, 108 to 112 (GEGKT), and aspartate 503. Residues 846 to 864 (AAAAEAPVAPAPQPAAAAP) are compositionally biased toward low complexity. The disordered stretch occupies residues 846–884 (AAAAEAPVAPAPQPAAAAPQPTPELVGAEAGEPDPAAWG). Cysteine 892, cysteine 894, cysteine 903, and histidine 904 together coordinate Zn(2+).

The protein belongs to the SecA family. As to quaternary structure, monomer and homodimer. Part of the essential Sec protein translocation apparatus which comprises SecA, SecYEG and auxiliary proteins SecDF-YajC and YidC. Requires Zn(2+) as cofactor.

Its subcellular location is the cell inner membrane. The protein localises to the cytoplasm. It carries out the reaction ATP + H2O + cellular proteinSide 1 = ADP + phosphate + cellular proteinSide 2.. Its function is as follows. Part of the Sec protein translocase complex. Interacts with the SecYEG preprotein conducting channel. Has a central role in coupling the hydrolysis of ATP to the transfer of proteins into and across the cell membrane, serving both as a receptor for the preprotein-SecB complex and as an ATP-driven molecular motor driving the stepwise translocation of polypeptide chains across the membrane. In Cereibacter sphaeroides (strain ATCC 17029 / ATH 2.4.9) (Rhodobacter sphaeroides), this protein is Protein translocase subunit SecA.